The sequence spans 245 residues: tRNA pseudouridine synthase A (245 aa).

Asp-52 (nucleophile) is an active-site residue. Residue Tyr-110 participates in substrate binding.

It belongs to the tRNA pseudouridine synthase TruA family. As to quaternary structure, homodimer.

It carries out the reaction uridine(38/39/40) in tRNA = pseudouridine(38/39/40) in tRNA. Functionally, formation of pseudouridine at positions 38, 39 and 40 in the anticodon stem and loop of transfer RNAs. The sequence is that of tRNA pseudouridine synthase A from Pseudothermotoga lettingae (strain ATCC BAA-301 / DSM 14385 / NBRC 107922 / TMO) (Thermotoga lettingae).